We begin with the raw amino-acid sequence, 428 residues long: L-fucose-proton symporter (428 aa).

Helical transmembrane passes span 10–30 (FIVP…ANDI), 51–71 (LVQL…ALFA), 78–98 (AGIL…WPAA), 100–120 (YEIF…LAFL), 147–167 (FNPL…LTNL), 204–224 (IALG…KMPA), 250–270 (EGVI…TFIV), 288–308 (IIAM…MKYL), 311–331 (EFML…VIFI), 339–359 (CLIL…GIAL), 371–391 (AGLV…GMII), and 401–421 (AVNF…IYGF).

The protein belongs to the major facilitator superfamily. FHS transporter (TC 2.A.1.7) family.

The protein localises to the cell inner membrane. The enzyme catalyses L-fucose(in) + H(+)(in) = L-fucose(out) + H(+)(out). In terms of biological role, mediates the uptake of L-fucose across the boundary membrane with the concomitant transport of protons into the cell (symport system). In Haemophilus influenzae (strain ATCC 51907 / DSM 11121 / KW20 / Rd), this protein is L-fucose-proton symporter (fucP).